Reading from the N-terminus, the 153-residue chain is Ribosome maturation factor RimP (153 aa).

Belongs to the RimP family.

The protein resides in the cytoplasm. In terms of biological role, required for maturation of 30S ribosomal subunits. In Clostridium botulinum (strain Kyoto / Type A2), this protein is Ribosome maturation factor RimP.